The following is a 158-amino-acid chain: Large ribosomal subunit protein uL30 (158 aa).

Belongs to the universal ribosomal protein uL30 family. As to quaternary structure, part of the 50S ribosomal subunit.

This Sulfurisphaera tokodaii (strain DSM 16993 / JCM 10545 / NBRC 100140 / 7) (Sulfolobus tokodaii) protein is Large ribosomal subunit protein uL30.